The following is a 241-amino-acid chain: Pyridoxine 5'-phosphate synthase (241 aa).

A 3-amino-2-oxopropyl phosphate-binding site is contributed by Asn-7. Position 9-10 (Asp-9–His-10) interacts with 1-deoxy-D-xylulose 5-phosphate. Position 18 (Arg-18) interacts with 3-amino-2-oxopropyl phosphate. His-43 serves as the catalytic Proton acceptor. Residues Arg-45 and His-50 each contribute to the 1-deoxy-D-xylulose 5-phosphate site. Glu-70 serves as the catalytic Proton acceptor. Thr-100 contacts 1-deoxy-D-xylulose 5-phosphate. His-191 serves as the catalytic Proton donor. Residues Gly-192 and Gly-213 to His-214 each bind 3-amino-2-oxopropyl phosphate.

This sequence belongs to the PNP synthase family. In terms of assembly, homooctamer; tetramer of dimers.

The protein localises to the cytoplasm. The enzyme catalyses 3-amino-2-oxopropyl phosphate + 1-deoxy-D-xylulose 5-phosphate = pyridoxine 5'-phosphate + phosphate + 2 H2O + H(+). It participates in cofactor biosynthesis; pyridoxine 5'-phosphate biosynthesis; pyridoxine 5'-phosphate from D-erythrose 4-phosphate: step 5/5. Catalyzes the complicated ring closure reaction between the two acyclic compounds 1-deoxy-D-xylulose-5-phosphate (DXP) and 3-amino-2-oxopropyl phosphate (1-amino-acetone-3-phosphate or AAP) to form pyridoxine 5'-phosphate (PNP) and inorganic phosphate. This Maridesulfovibrio salexigens (strain ATCC 14822 / DSM 2638 / NCIMB 8403 / VKM B-1763) (Desulfovibrio salexigens) protein is Pyridoxine 5'-phosphate synthase.